A 488-amino-acid chain; its full sequence is Glutamyl-tRNA(Gln) amidotransferase subunit A (488 aa).

Active-site charge relay system residues include Lys-79 and Ser-159. Ser-183 (acyl-ester intermediate) is an active-site residue.

It belongs to the amidase family. GatA subfamily. As to quaternary structure, heterotrimer of A, B and C subunits.

The enzyme catalyses L-glutamyl-tRNA(Gln) + L-glutamine + ATP + H2O = L-glutaminyl-tRNA(Gln) + L-glutamate + ADP + phosphate + H(+). Allows the formation of correctly charged Gln-tRNA(Gln) through the transamidation of misacylated Glu-tRNA(Gln) in organisms which lack glutaminyl-tRNA synthetase. The reaction takes place in the presence of glutamine and ATP through an activated gamma-phospho-Glu-tRNA(Gln). The chain is Glutamyl-tRNA(Gln) amidotransferase subunit A from Wolbachia pipientis subsp. Culex pipiens (strain wPip).